Consider the following 460-residue polypeptide: MATGKIIQVIGAVVDVEFPQDAVPKVYNALEVEGAAEKLVLEVQQQLGGGVVRCIAMGSSDGLSRGLKVINLEHPIEVPVGKSTLGRIMNVLGDPIDMKGPIGEEERWAIHREAPSYEDLASSQDLLETGIKVMDLICPFAKGGKVGLFGGAGVGKTVNMMELIRNIAIEHSGYSVFAGVGERTREGNDFYHEMTDSNVLDKVSLVYGQMNEPPGNRLRVALTGLTMAEKFRDEGRDVLLFIDNIYRYTLAGTEVSALLGRMPSAVGYQPTLAEEMGVLQERITSTKTGSITSVQAVYVPADDLTDPSPATTFAHLDATVVLSRQIASLGIYPAVDPLDSTSRQLDPLVVGQEHYDVARGVQSILQRYQELKDIIAILGMDELSEDDKLVVSRARKIQRFLSQPFFVAEVFTGSPGKFVSLKDTIRGFKGIMNGDYDHLPEQAFYMVGTIEEAVEKAKKL.

Residue 150-157 coordinates ATP; it reads GGAGVGKT.

Belongs to the ATPase alpha/beta chains family. F-type ATPases have 2 components, CF(1) - the catalytic core - and CF(0) - the membrane proton channel. CF(1) has five subunits: alpha(3), beta(3), gamma(1), delta(1), epsilon(1). CF(0) has three main subunits: a(1), b(2) and c(9-12). The alpha and beta chains form an alternating ring which encloses part of the gamma chain. CF(1) is attached to CF(0) by a central stalk formed by the gamma and epsilon chains, while a peripheral stalk is formed by the delta and b chains.

The protein resides in the cell inner membrane. It carries out the reaction ATP + H2O + 4 H(+)(in) = ADP + phosphate + 5 H(+)(out). Produces ATP from ADP in the presence of a proton gradient across the membrane. The catalytic sites are hosted primarily by the beta subunits. In Yersinia enterocolitica serotype O:8 / biotype 1B (strain NCTC 13174 / 8081), this protein is ATP synthase subunit beta.